A 560-amino-acid chain; its full sequence is MAHLQRTFPTEMSKGRASFPKGFLFGTASSSYQYEGAVNEGARGQSVWDHFSNRFPHRISDSSDGNVAVDFYHRYKEDIKRMKDINMDSFRLSIAWPRVLPYGKRDRGVSEEGIKFYNDVIDELLANEITPLVTIFHWDIPQDLEDEYGGFLSEQIIDDFRDYASLCFERFGDRVSLWCTMNEPWVYSVAGYDTGRKAPGRCSKYVNGASVAGMSGYEAYIVSHNMLLAHAEAVEVFRKCDHIKNGQIGIAHNPLWYEPYDPSDPDDVEGCNRAMDFMLGWHQHPTACGDYPETMKKSVGDRLPSFTPEQSKKLIGSCDYVGINYYSSLFVKSIKHVDPTQPTWRTDQGVDWMKTNIDGKQIAKQGGSEWSFTYPTGLRNILKYVKKTYGNPPILITENGYGEVAEQSQSLYMYNPSIDTERLEYIEGHIHAIHQAIHEDGVRVEGYYVWSLLDNFEWNSGYGVRYGLYYIDYKDGLRRYPKMSALWLKEFLRFDQEDDSSTSKKEEKKESYGKQLLHSVQDSQFVHSIKDSGALPAVLGSLFVVSATVGTSLFFKGANN.

Residues Q33, H137, N182 to E183, Y326, E398, W450, E457 to W458, and Y466 contribute to the a beta-D-glucoside site. E183 (proton donor) is an active-site residue. The active-site Nucleophile is E398.

The protein belongs to the glycosyl hydrolase 1 family.

It localises to the peroxisome. It catalyses the reaction Hydrolysis of terminal, non-reducing beta-D-glucosyl residues with release of beta-D-glucose.. In terms of biological role, possesses beta-glucosidase activity toward 4-methyl-umbelliferyl-beta-D-glucoside in vitro. Possesses myrosinase activity toward indol-3-yl-methylglucosinolate (I3M) and 4-methoxy-indol-3-yl-methylglucosinolate (4MO-I3M) in vivo. Component of an inducible preinvasion resistance mechanism that prevents penetration of the nonhost fungal species B.graminis and E.pisi. Involved in indole glucosinolate (IGS) activation during pattern-triggered immunity (PTI). Functions as a myrosinase for the breakdown of flg22-triggered IGS. Required for both callose deposition and glucosinolate activation during pathogen-triggered resistance. During fungal attack, required for IGS activation that mediates broad-spectrum antifungal defense. The chain is Beta-glucosidase 26, peroxisomal from Arabidopsis thaliana (Mouse-ear cress).